A 565-amino-acid chain; its full sequence is Polycomb protein EED (565 aa).

WD repeat units lie at residues 89 to 133 (DDGN…LYRT), 136 to 176 (GHGG…EKQP), 185 to 224 (GHSY…NEHM), and 240 to 278 (IHNN…SDDP). Residues 417-488 (VKKAPGAAGS…SASPDPDSPF (72 aa)) form a disordered region. The segment covering 429–450 (GTAANGGHNNNNNNNNNNNNNN) has biased composition (low complexity). Residues 451–468 (HETGSQRSFSATNNLSNS) are compositionally biased toward polar residues. Residues 519–559 (IDGAFVGRQVGWSPEGEWCVVVGNGNRALIYQRWGKERGLG) form a WD 5 repeat.

Belongs to the WD repeat ESC family. In terms of assembly, component of the polycomb repressive complex 2 (PRC2) that consists of four core subunits icluding EZH2, EED, SUZ12, and RBBP4, among which EZH2 is the catalytic subunit and which minimally requires EED and SUZ12 for catalysis.

The protein localises to the nucleus. Functionally, component of the of the Polycomb Repressive Complex 2 (PRC2), a histone H3 lysine methyltransferase responsible for generating mono-, di-, and tri-methylation on Lys27 (H3K27me1, H3K27me2 and H3K27me3). The tri-methylated form is known to be critical in gene repression, and its proper placement is essential in defining repression patterns during development. EED is not a catalytic subunit but is required for the complex regulation of histone H3 lysine methylation by EZH2. This Chaetomium thermophilum (strain DSM 1495 / CBS 144.50 / IMI 039719) (Thermochaetoides thermophila) protein is Polycomb protein EED.